We begin with the raw amino-acid sequence, 119 residues long: Large ribosomal subunit protein uL24 (119 aa).

The protein belongs to the universal ribosomal protein uL24 family. In terms of assembly, part of the 50S ribosomal subunit.

Functionally, one of two assembly initiator proteins, it binds directly to the 5'-end of the 23S rRNA, where it nucleates assembly of the 50S subunit. Located at the polypeptide exit tunnel on the outside of the subunit. The polypeptide is Large ribosomal subunit protein uL24 (Haloquadratum walsbyi (strain DSM 16790 / HBSQ001)).